A 362-amino-acid polypeptide reads, in one-letter code: S-adenosylmethionine:tRNA ribosyltransferase-isomerase (362 aa).

The protein belongs to the QueA family. Monomer.

It is found in the cytoplasm. It carries out the reaction 7-aminomethyl-7-carbaguanosine(34) in tRNA + S-adenosyl-L-methionine = epoxyqueuosine(34) in tRNA + adenine + L-methionine + 2 H(+). It participates in tRNA modification; tRNA-queuosine biosynthesis. Its function is as follows. Transfers and isomerizes the ribose moiety from AdoMet to the 7-aminomethyl group of 7-deazaguanine (preQ1-tRNA) to give epoxyqueuosine (oQ-tRNA). The chain is S-adenosylmethionine:tRNA ribosyltransferase-isomerase from Xanthobacter autotrophicus (strain ATCC BAA-1158 / Py2).